The following is a 187-amino-acid chain: Elongation factor P (187 aa).

Belongs to the elongation factor P family.

It localises to the cytoplasm. Its pathway is protein biosynthesis; polypeptide chain elongation. Functionally, involved in peptide bond synthesis. Stimulates efficient translation and peptide-bond synthesis on native or reconstituted 70S ribosomes in vitro. Probably functions indirectly by altering the affinity of the ribosome for aminoacyl-tRNA, thus increasing their reactivity as acceptors for peptidyl transferase. The chain is Elongation factor P from Chromobacterium violaceum (strain ATCC 12472 / DSM 30191 / JCM 1249 / CCUG 213 / NBRC 12614 / NCIMB 9131 / NCTC 9757 / MK).